The following is a 353-amino-acid chain: Inactive ubiquitin thioesterase OTULINL (353 aa).

Residues 1-80 are required for membrane binding; that stretch reads MEAPRSAPRE…KWWIGYLQRK (80 aa). One can recognise an OTU domain in the interval 125-353; sequence KCVRAVKRDN…NGHHYHIPVF (229 aa).

Belongs to the peptidase C65 family. Otulin subfamily. Does not bind ubiquitin or ubiquitin-like proteins.

The protein localises to the cytoplasm. Its subcellular location is the endoplasmic reticulum membrane. It is found in the nucleus envelope. Functionally, lacks deubiquitinase activity. The polypeptide is Inactive ubiquitin thioesterase OTULINL (Mus musculus (Mouse)).